Reading from the N-terminus, the 321-residue chain is Lipoyl synthase (321 aa).

[4Fe-4S] cluster is bound by residues C68, C73, C79, C94, C98, C101, and S308. The Radical SAM core domain occupies 80–297 (FNHGTATFMI…KAEAMAMGFT (218 aa)).

It belongs to the radical SAM superfamily. Lipoyl synthase family. [4Fe-4S] cluster is required as a cofactor.

It is found in the cytoplasm. It carries out the reaction [[Fe-S] cluster scaffold protein carrying a second [4Fe-4S](2+) cluster] + N(6)-octanoyl-L-lysyl-[protein] + 2 oxidized [2Fe-2S]-[ferredoxin] + 2 S-adenosyl-L-methionine + 4 H(+) = [[Fe-S] cluster scaffold protein] + N(6)-[(R)-dihydrolipoyl]-L-lysyl-[protein] + 4 Fe(3+) + 2 hydrogen sulfide + 2 5'-deoxyadenosine + 2 L-methionine + 2 reduced [2Fe-2S]-[ferredoxin]. The protein operates within protein modification; protein lipoylation via endogenous pathway; protein N(6)-(lipoyl)lysine from octanoyl-[acyl-carrier-protein]: step 2/2. Functionally, catalyzes the radical-mediated insertion of two sulfur atoms into the C-6 and C-8 positions of the octanoyl moiety bound to the lipoyl domains of lipoate-dependent enzymes, thereby converting the octanoylated domains into lipoylated derivatives. This chain is Lipoyl synthase, found in Cronobacter sakazakii (strain ATCC BAA-894) (Enterobacter sakazakii).